Consider the following 2531-residue polypeptide: MDISETEYNDSDPPVQENGNGKAVVEDEVNDEESNMETVDLGLDDKTSDASSQNVFKNIDNEPSDDQQNVEESENITLEKPEEISAPPTVVSTSQDVSPPPAIESLPPLLEGKELELEDDVTSSLPRLLSKTTLIHSNEEGADETIQRLISSLHSNSPNMDRTQIVDHLFNLLVGGHFDQESKFVIEHVANVDHMLTLLSHCDCDLQNEIWSLFLAVMKKSNRNLEACTRVGLISKNFFLNLVLDLLPEAPPLLADLLVQIIAALVAYSINVKQTKHLLRALRSTKDQWPPNSLKLLHVLKEMPQHDSADVFFSFPGKDQSGIILPPIKTMPYQQGWTFATWLRMEPLNSVTFEKEQPVLYSFRTSKGIGYSCHIFGNCLVVNVEKAKGKEQSRCVKAELGARKWHHIAIAHCYSRWGRSDIKCFIDGQLAETIELSWVVTSTTSWDRCSIGVSADGAVNTAFCGQMGAMYLFAESLSLQQANSLFCLGPAYQSTFKHDSETSLPEGYKKHLFDGHLHSSLVFAYCPKNCHGQLCLFTPPKTAANTYFVQIPHAVMKEGVEVITTHSIHKSLQSVGGIQILLPLFAQIDLPSSHDNTIDGDVCQTLLSLISLLLSSSQSSQQQLFHSKGFLIISSCLQEASPSHLSMKVLEQIIHIAKFLLRCPAGGPLLKHLFDYILFNPKLWIRARPEVQVHLYQYLATDFLANNNFSQMLRRVPTVIEMCHTLKHFYWLALPQTVSDYTVEERPENFATAEIVSIRSAILTFINRIIISSNSPDEEEKARDQEIHTLLNLLATVREDDNLYDVLALVTRLLAEHPAIMIPAIDKNKALGIIFNLLAAPNELIRIPALKILGFFLSRSTLKRKTESMGSQNLFSLIGERLLSHKRTISLPTYNVLLEVLVEQMTPTFTYAAHQPAQPDWKFENPHLLKVIAHVISQCEETESLVQIKKCFLIDIINLCRESKENRRTILQMSVWQDWLIGLAYVFHTSESQNEVSELVWEAFSILLHHALRHEYGGWRVWVDTLAIAHSKVSYEKFKRRLAEAKAKAEKAETGEEAKMEPTPVYRAPEFAWSEVHIRLLADLLSGIERTVEEWKTQEGGISDQCNASENQVFVGNVVHVISQLADSLIMACGGLLPLLASATAPNNDMEIVDPCQQQLPISVAASFLMRFAKLVDTFVLASGVSFSELEQEKNMPAGGVLRQSLRISATVTVRHILASRIQQPDTPRYETNSAKKNQCIMDFVKEALENFSPEGLENVERLVQDSDITRIKGVVYRDMVEENRQAQFLALSVIYLVSVLMVSRYRDILEPPSSPSPFFDSTTTKQENAERGEKLFEFSHNPLFLELPESSSEAVANGKVANDGDHASIKNGSDHSENGADEETEEKGEQGQGDNGGTIAAIKVANSDMKNDGNEYNEEELKKMHQSNGRRPSTLMPPQQTAERRAYLTTKLQTALETCAPLLREMMSDFRGYLQKTLVGTHGQEIMNDTKVLETLRNRNASVIELVMLLCSQEWQTSLQKHAGLAFIELVNEGRLMAHATRDHVLRVANEADFILNRLRAEDVSKHAQFEAESREQLNARYEEYSRCDLLIVSGRLRDSLNATRLLDKMSAILTDGDDSKSGSQFWKLDVWEDDSRRRKRFVPNPYGSRHEEANLPEGEKNEEPEISEQERIRKILKGLFSQRHATTTSTGGQELVDESDIDKWAQEVDPTPSSQSACFSTAAKLIVPGVVVPGTLSVTASDLFFDANESDPNYKKQCAQVLRYCEALHARWNLQEIRAIFLRRYLLQNTALEMFLASRTAIMFAFDSEDTVRKVVYQLPRVGVGVKYGLPQSRKTSLMTPRQLFKHSDMCAKWQKREISNFDYLMFLNTVAGRTFNDLSQYPVFPWILTNYTSDTLDLSVASNFRDLSKPIGALNEARRKFFTDRYASWDDDLVPAFHYGTHYSTPAFTLNWLLRLEPFASMFINLHDGKFDHPDRITHSIKDSWDRCQRDSHDVKELIPELFYLPEMFRNSSKFNLGRRADGTLVDDVVLPPWAESPEHFVLMHRQALESDLVSCQLNQWIDLIFGYKQRGAEAVRATNVFYHLTYEGTVTQKMAETPGQVSAIEQQILSFGQTPSQLLAEAHPPRHSIMTMAPTMFRRHDDDLCMMMKYISNSPVVYLAANTFHQLPHPTVVGVAQNLVFSLNKWDNSYSYGSTQRSALSMDPSNVEGQVALPLTADPQLATAASTTPIARRHLGDAFDQRLQVQCSNFVTTTDSKYIFACGYPDYSFRIVDTDSGRVRQAVYGHGDVVTCIARSETSLFSDCYVVTGSMDCTVVLWHWNGTTGFIAGEYNQPGEVPSPRSILTGHEASISALCVSAEHGLVVSGCEDGVILIHTTASDLLRRIRGHGTVTQLSMSRECILLVLFDSKRMTTYSSTARKLNEVLSEEKIECVTVTRDGEFAVTGAVNGRITIWRMFPLNKLYTYQPLNSAVRSVAVVASHRFILGGLDSGAIVVFNADFNRWHYEYKHRYIQNSSATKPAQASPQK.

3 stretches are compositionally biased toward acidic residues: residues 1–10, 26–35, and 62–74; these read MDISETEYND, EDEVNDEESN, and EPSD…EESE. 4 disordered regions span residues 1-101, 1363-1398, 1420-1440, and 1642-1670; these read MDIS…SPPP, NDGD…DNGG, EELK…MPPQ, and RFVP…EISE. Residues 1363-1379 show a composition bias toward basic and acidic residues; the sequence is NDGDHASIKNGSDHSEN. Positions 1427 to 1440 are enriched in polar residues; that stretch reads QSNGRRPSTLMPPQ. Positions 1650 to 1670 are enriched in basic and acidic residues; it reads SRHEEANLPEGEKNEEPEISE. Positions 1714 to 1822 constitute a BEACH-type PH domain; the sequence is PSSQSACFST…TVRKVVYQLP (109 aa). The BEACH domain maps to 1841 to 2130; it reads MTPRQLFKHS…QLLAEAHPPR (290 aa). WD repeat units follow at residues 2289–2332, 2350–2389, 2429–2468, and 2471–2510; these read GHGD…GFIA, GHEA…LRRI, LSEE…KLYT, and PLNS…WHYE.

The protein belongs to the WD repeat neurobeachin family. As to quaternary structure, interacts with RII subunit of PKA.

The protein localises to the cytoplasm. It localises to the membrane. It is found in the nucleus. Its function is as follows. Binds to type II regulatory subunits of protein kinase A and anchors/targets them to the membrane. May anchor the kinase to cytoskeletal and/or organelle-associated proteins. Regulates endosomal traffic in polarized epithelial cells such as the vulval precursor cells and intestinal cells. Thought to act as a negative regulator of lin-12 activity in vulval precursor cells. May have a role in the internalization process from basolateral surface of polarized epithelial cells. This chain is Putative neurobeachin homolog, found in Caenorhabditis briggsae.